We begin with the raw amino-acid sequence, 255 residues long: Large ribosomal subunit protein uL2 (255 aa).

The disordered stretch occupies residues 201-229 (YAHPHGGGSHQQGGTPVKKNAPPGQKVGF).

This sequence belongs to the universal ribosomal protein uL2 family. Part of the 50S ribosomal subunit. Forms a bridge to the 30S subunit in the 70S ribosome.

One of the primary rRNA binding proteins. Required for association of the 30S and 50S subunits to form the 70S ribosome, for tRNA binding and peptide bond formation. It has been suggested to have peptidyltransferase activity; this is somewhat controversial. Makes several contacts with the 16S rRNA in the 70S ribosome. In Caldivirga maquilingensis (strain ATCC 700844 / DSM 13496 / JCM 10307 / IC-167), this protein is Large ribosomal subunit protein uL2.